Consider the following 308-residue polypeptide: tRNA uridine(34) hydroxylase (308 aa).

The Rhodanese domain occupies 129-223 (QEKDVLILDA…YGKHPETQGV (95 aa)). Cys-183 acts as the Cysteine persulfide intermediate in catalysis.

The protein belongs to the TrhO family.

The catalysed reaction is uridine(34) in tRNA + AH2 + O2 = 5-hydroxyuridine(34) in tRNA + A + H2O. Its function is as follows. Catalyzes oxygen-dependent 5-hydroxyuridine (ho5U) modification at position 34 in tRNAs. This is tRNA uridine(34) hydroxylase from Aster yellows witches'-broom phytoplasma (strain AYWB).